The chain runs to 514 residues: 2,3-bisphosphoglycerate-independent phosphoglycerate mutase (514 aa).

Mn(2+) is bound by residues aspartate 14 and serine 64. Serine 64 (phosphoserine intermediate) is an active-site residue. Residues histidine 125, 155-156 (RD), arginine 187, arginine 193, 263-266 (RADR), and lysine 336 each bind substrate. Mn(2+) is bound by residues aspartate 403, histidine 407, aspartate 444, histidine 445, and histidine 463.

Belongs to the BPG-independent phosphoglycerate mutase family. Monomer. It depends on Mn(2+) as a cofactor.

The enzyme catalyses (2R)-2-phosphoglycerate = (2R)-3-phosphoglycerate. It participates in carbohydrate degradation; glycolysis; pyruvate from D-glyceraldehyde 3-phosphate: step 3/5. Functionally, catalyzes the interconversion of 2-phosphoglycerate and 3-phosphoglycerate. This chain is 2,3-bisphosphoglycerate-independent phosphoglycerate mutase, found in Shewanella sp. (strain W3-18-1).